The sequence spans 103 residues: ATP synthase subunit f, mitochondrial (103 aa).

The transit peptide at 1–6 (MIFRRQ) directs the protein to the mitochondrion.

As to quaternary structure, F-type ATP synthases have 2 components, the catalytic core F(1) and the membrane-embedded component F(0), linked together by a central stalk and a peripheral stalk. The central stalk, also called rotor shaft, is often seen as part of F(1). The peripheral stalk is seen as part of F(0). F(0) contains the membrane channel next to the rotor. F-type ATP synthases form dimers but each monomer functions independently in ATP generation. The dimer consists of 17 different polypeptides: ATP1 (subunit alpha, 3 molecules per monomer, part of F(1)), ATP2 (subunit beta, 3 copies per monomer, part of F(1)), ATP3 (subunit gamma, part of the central stalk), ATP4 (subunit b, part of the peripheral stalk), ATP5/OSCP (subunit 5/OSCP, part of the peripheral stalk), ATP6 (subunit a, part of the peripheral stalk), ATP7 (subunit d, part of the peripheral stalk), ATP8 (subunit 8, part of the peripheral stalk), OLI1 (subunit c, part of the rotor, 10 molecules per monomer), ATP14 (subunit h, part of the peripheral stalk), ATP15 (subunit epsilon, part of the central stalk), ATP16 (subunit delta, part of the central stalk), ATP17 (subunit f, part of the peripheral stalk), ATP18 (subunit i/j, part of the peripheral stalk), ATP19 (subunit k, dimer-specific, at interface between monomers), ATP20 (subunit g, at interface between monomers), TIM11 (subunit e, at interface between monomers).

Its subcellular location is the mitochondrion inner membrane. Functionally, mitochondrial membrane ATP synthase (F(1)F(0) ATP synthase or Complex V) produces ATP from ADP in the presence of a proton gradient across the membrane which is generated by electron transport complexes of the respiratory chain. F-type ATP synthases consist of two structural domains, F(1) - containing the extramembraneous catalytic core, and F(0) - containing the membrane proton channel, linked together by a central stalk and a peripheral stalk. During catalysis, ATP synthesis in the catalytic domain of F(1) is coupled via a rotary mechanism of the central stalk subunits to proton translocation. Part of the complex F(0) domain. Minor subunit located with subunit a/ATP6 in the membrane. This is ATP synthase subunit f, mitochondrial from Yarrowia lipolytica (strain CLIB 122 / E 150) (Yeast).